Consider the following 207-residue polypeptide: Dephospho-CoA kinase (207 aa).

The DPCK domain occupies 10–207 (ILGLTGGIGS…FYLTLSGGQS (198 aa)). Residue 18–23 (GSGKSA) participates in ATP binding.

The protein belongs to the CoaE family.

The protein localises to the cytoplasm. The catalysed reaction is 3'-dephospho-CoA + ATP = ADP + CoA + H(+). It functions in the pathway cofactor biosynthesis; coenzyme A biosynthesis; CoA from (R)-pantothenate: step 5/5. Catalyzes the phosphorylation of the 3'-hydroxyl group of dephosphocoenzyme A to form coenzyme A. In Pseudomonas fluorescens (strain Pf0-1), this protein is Dephospho-CoA kinase.